A 111-amino-acid chain; its full sequence is Regulator of ribonuclease activity B (111 aa).

This sequence belongs to the RraB family. As to quaternary structure, interacts with the C-terminal region of Rne.

The protein resides in the cytoplasm. In terms of biological role, globally modulates RNA abundance by binding to RNase E (Rne) and regulating its endonucleolytic activity. Can modulate Rne action in a substrate-dependent manner by altering the composition of the degradosome. This Pseudoalteromonas translucida (strain TAC 125) protein is Regulator of ribonuclease activity B.